Here is a 416-residue protein sequence, read N- to C-terminus: NADH-quinone oxidoreductase subunit D (416 aa).

This sequence belongs to the complex I 49 kDa subunit family. NDH-1 is composed of 14 different subunits. Subunits NuoB, C, D, E, F, and G constitute the peripheral sector of the complex.

Its subcellular location is the cell inner membrane. The catalysed reaction is a quinone + NADH + 5 H(+)(in) = a quinol + NAD(+) + 4 H(+)(out). In terms of biological role, NDH-1 shuttles electrons from NADH, via FMN and iron-sulfur (Fe-S) centers, to quinones in the respiratory chain. The immediate electron acceptor for the enzyme in this species is believed to be ubiquinone. Couples the redox reaction to proton translocation (for every two electrons transferred, four hydrogen ions are translocated across the cytoplasmic membrane), and thus conserves the redox energy in a proton gradient. The chain is NADH-quinone oxidoreductase subunit D from Caulobacter sp. (strain K31).